The sequence spans 714 residues: Phenylalanine 2-monooxygenase precursor (714 aa).

A propeptide spans 1–15 (MGVTVIPRLLGLKDE) (removed in mature form; occupies the channel of the substrate amino acid from the outside of the protein to the interior flavin ring in the precursor). FAD contacts are provided by residues Gly-2, Gly-68, and 95–96 (EA). Positions 108–109 (IK) are cleaved as a propeptide — linker peptide. FAD contacts are provided by residues Arg-120, 141-144 (GAMR), and Val-375. Residue Arg-144 coordinates substrate. Substrate is bound at residue Tyr-537. FAD-binding positions include 652-653 (SD) and 660-662 (GWL). Gly-660 provides a ligand contact to substrate.

The protein belongs to the phenylalanine 2-monooxygenase family. In terms of assembly, heterotetramer composed of 2 alpha and 2 beta subunits. It depends on FAD as a cofactor. Proteolytically cleaved to yield the active enzyme. Cleavage of the linkage between the 2 subunits causes reshaping of the oxygen channel and the hydrophobic environment around the flavin ring. Removal of the prosequence causes opening of the amino acid channel.

The catalysed reaction is L-phenylalanine + O2 = 2-phenylacetamide + CO2 + H2O. Functionally, catalyzes both oxygenative decarboxylation and oxidative deamination, depending on the substrate used. Has high activity for L-Phe and L-Tyr, but relatively low activities for L-Met and L-Trp. L-Phe is mainly oxygenated and L-Met is mainly oxidized. The chain is Phenylalanine 2-monooxygenase precursor from Pseudomonas sp.